Reading from the N-terminus, the 1708-residue chain is Non-structural polyprotein pORF1 (1708 aa).

The region spanning 56–240 (VFRPEVLWNH…HDVSILRAWI (185 aa)) is the Alphavirus-like MT domain. The tract at residues 60–240 (EVLWNHPIQR…HDVSILRAWI (181 aa)) is methyltransferase. A Y-domain region spans residues 241–439 (RTTKIVGDHP…FYAQCRRWLS (199 aa)). A disulfide bond links Cys434 and Cys481. The interval 442-509 (FHLDPRVLVF…EAYEGSEVDP (68 aa)) is putative protease. Residues 510-691 (AEPAHLDVSG…FSPGHIWESA (182 aa)) form a zinc-binding region. 3 residues coordinate Zn(2+): His671, Glu673, and His686. Residues 714 to 793 (FSPPEAAAPV…PPTPPPSRTR (80 aa)) form a hinge region. In terms of domain architecture, Macro spans 790–936 (SRTRRLLYTY…LYLTEPAAAW (147 aa)). Residues 800-957 (PDGAKVYAGS…TITEDTARTA (158 aa)) are X-domain. One can recognise a (+)RNA virus helicase ATP-binding domain in the interval 949 to 1097 (ITEDTARTAN…RPELAPTSWW (149 aa)). The NTPase/helicase stretch occupies residues 975-1219 (GCTISPGIVH…ISDVIVNNFF (245 aa)). 990 to 997 (GVPGSGKS) serves as a coordination point for ATP. Residues 1098–1231 (HVTHRCPADV…GGEVGHHRPS (134 aa)) form the (+)RNA virus helicase C-terminal domain. The segment at 1222 to 1708 (GGEVGHHRPS…LTNSIIQRVE (487 aa)) is RNA-directed RNA polymerase. The 112-residue stretch at 1469–1580 (CMVFENDFSE…LCSDYRQSRN (112 aa)) folds into the RdRp catalytic domain.

It belongs to the hepevirus non-structural polyprotein family. In terms of assembly, the protease domain interacts with host EIF2AK4 (via C-terminus); this interaction inhibits dimerization of EIF2AK4 and prevents EIF2AK4-mediated phosphorylation of host EIF2A. Mg(2+) serves as cofactor. ORF1 polyprotein does not seem to be processed into distinct enzymatic domains by a viral protease belonging to ORF1, but could be processed by a host serine protease like thrombin.

The protein localises to the host cytoplasm. It is found in the host perinuclear region. It carries out the reaction RNA(n) + a ribonucleoside 5'-triphosphate = RNA(n+1) + diphosphate. The enzyme catalyses GTP + S-adenosyl-L-methionine = N(7)-methyl-GTP + S-adenosyl-L-homocysteine. Putative protease: Inhibited by chymostatin. Methyltransferase: Displays a capping enzyme activity. This function is necessary since all viral RNAs are synthesized in the cytoplasm, and host capping enzymes are restricted to the nucleus. The enzymatic reaction involves a covalent link between 7-methyl-GMP and the methyltransferase, whereas eukaryotic capping enzymes form a covalent complex only with GMP. Methyltransferase catalyzes transfer of a methyl group from S-adenosylmethionine to GTP and GDP to yield m(7)GTP or m(7)GDP. GDP is a better substrate than GTP. This enzyme also displays guanylyltransferase activity to form a covalent complex, methyltransferase-m(7)GMP, from which 7-methyl-GMP is transferred to the mRNA to create the cap structure. Its function is as follows. Y-domain: Indispensable for virus replication. In terms of biological role, putative protease: The putative protease domain although necessary for replication of the virus may not be a protease but rather a structural Zn(2+)-binding domain. Inhibits induction of IFN-beta by MDA5 and RIG-I pathways and down-regulates the expression of MDA5. Functionally, NTPase/helicase: Multi-functional protein that exhibits NTPase and RNA unwinding activities. Hydrolyzes all NTPs efficiently and unwinds RNA duplexes containing 5' overhangs. Possesses a sequence independent RNA-5'-triphosphatase (RTPase) activity suggestive of its role in forming viral cap structure. Also participates in viral genome replication, RNA translocation and genome packaging/unpackaging. RNA-directed RNA polymerase: Plays an essential role in the virus replication. Binds to the 3'-end of the genomic RNA to initiate viral replication. This Bandicota bengalensis (lesser bandicoot rat) protein is Non-structural polyprotein pORF1.